A 213-amino-acid chain; its full sequence is Putative manganese efflux pump MntP (213 aa).

7 consecutive transmembrane segments (helical) span residues Leu6–Met26, Ala34–Leu54, Ala58–Leu78, Gly107–Pro127, Leu132–Thr152, Val153–Val173, and Leu192–Pro212.

This sequence belongs to the MntP (TC 9.B.29) family.

Its subcellular location is the cell membrane. Its function is as follows. Probably functions as a manganese efflux pump. The chain is Putative manganese efflux pump MntP from Heliobacterium modesticaldum (strain ATCC 51547 / Ice1).